A 171-amino-acid chain; its full sequence is Cardioactive peptide (171 aa).

A signal peptide spans 1 to 26 (MQMYHVVLGCSLAILLVILDIPQASC). A propeptide spanning residues 27-49 (DDVVIQKRQVDPAEMDRLLDPKR) is cleaved from the precursor. Cysteine 54 and cysteine 60 are joined by a disulfide. At cysteine 60 the chain carries Cysteine amide. A propeptide spanning residues 64-171 (RSDESMGTLV…QEEITKPWSR (108 aa)) is cleaved from the precursor. The segment at 116 to 171 (QSNQFGAGMDRPLPLPIAGYRRKRFADPESQAPAPHSNLPRATSQLQEEITKPWSR) is disordered.

Central nervous system; most neurons exhibit coexpression with burs.

Its subcellular location is the secreted. Its function is as follows. Cardioregulatory neurohormone that increases heart beat rate during adult wing inflation; has no effect on beat amplitude. The effect of CCAP is both ino- and chronotropic. The chain is Cardioactive peptide from Periplaneta americana (American cockroach).